We begin with the raw amino-acid sequence, 339 residues long: Dihydroorotate dehydrogenase (quinone) (339 aa).

FMN contacts are provided by residues 62–66 and T86; that span reads AGMDK. A substrate-binding site is contributed by K66. 111–115 serves as a coordination point for substrate; sequence NRMGF. FMN-binding residues include N139 and N172. N172 is a substrate binding site. The active-site Nucleophile is S175. N177 contacts substrate. 2 residues coordinate FMN: K217 and T245. Residue 246–247 participates in substrate binding; it reads NT. FMN-binding positions include G268, G297, and 318–319; that span reads YS.

Belongs to the dihydroorotate dehydrogenase family. Type 2 subfamily. Monomer. FMN serves as cofactor.

It localises to the cell membrane. It carries out the reaction (S)-dihydroorotate + a quinone = orotate + a quinol. Its pathway is pyrimidine metabolism; UMP biosynthesis via de novo pathway; orotate from (S)-dihydroorotate (quinone route): step 1/1. Catalyzes the conversion of dihydroorotate to orotate with quinone as electron acceptor. The protein is Dihydroorotate dehydrogenase (quinone) of Shewanella sediminis (strain HAW-EB3).